Reading from the N-terminus, the 333-residue chain is Ketol-acid reductoisomerase (NADP(+)) (333 aa).

The KARI N-terminal Rossmann domain maps to 1-181 (MKVYYDQDAD…GGARSGVIET (181 aa)). Residues 24 to 27 (YGSQ), Arg47, and 82 to 85 (DEVQ) contribute to the NADP(+) site. His107 is a catalytic residue. Gly133 provides a ligand contact to NADP(+). The region spanning 182–327 (TFREETETDL…KELRSMMPWL (146 aa)) is the KARI C-terminal knotted domain. Mg(2+) contacts are provided by Asp190, Glu194, Glu226, and Glu230. Ser251 serves as a coordination point for substrate.

Belongs to the ketol-acid reductoisomerase family. The cofactor is Mg(2+).

It catalyses the reaction (2R)-2,3-dihydroxy-3-methylbutanoate + NADP(+) = (2S)-2-acetolactate + NADPH + H(+). The catalysed reaction is (2R,3R)-2,3-dihydroxy-3-methylpentanoate + NADP(+) = (S)-2-ethyl-2-hydroxy-3-oxobutanoate + NADPH + H(+). It functions in the pathway amino-acid biosynthesis; L-isoleucine biosynthesis; L-isoleucine from 2-oxobutanoate: step 2/4. It participates in amino-acid biosynthesis; L-valine biosynthesis; L-valine from pyruvate: step 2/4. Its function is as follows. Involved in the biosynthesis of branched-chain amino acids (BCAA). Catalyzes an alkyl-migration followed by a ketol-acid reduction of (S)-2-acetolactate (S2AL) to yield (R)-2,3-dihydroxy-isovalerate. In the isomerase reaction, S2AL is rearranged via a Mg-dependent methyl migration to produce 3-hydroxy-3-methyl-2-ketobutyrate (HMKB). In the reductase reaction, this 2-ketoacid undergoes a metal-dependent reduction by NADPH to yield (R)-2,3-dihydroxy-isovalerate. The polypeptide is Ketol-acid reductoisomerase (NADP(+)) (Desulfovibrio desulfuricans (strain ATCC 27774 / DSM 6949 / MB)).